The following is a 260-amino-acid chain: Transmembrane protein 106C (260 aa).

Gly2 carries N-myristoyl glycine lipidation. Residues 85–105 form a helical membrane-spanning segment; sequence YVLLSVLLCLLASGLVFFFLF. A glycan (N-linked (GlcNAc...) asparagine) is linked at Asn171. Residues 196 to 216 form a helical membrane-spanning segment; that stretch reads SYVYFYCTLPAILVHNIVIFM.

It belongs to the TMEM106 family. In terms of assembly, interacts with TMEM106B.

The protein resides in the endoplasmic reticulum membrane. Its subcellular location is the membrane. This Rattus norvegicus (Rat) protein is Transmembrane protein 106C (Tmem106c).